We begin with the raw amino-acid sequence, 819 residues long: Lysine-specific demethylase JMJ18 (819 aa).

A disordered region spans residues 1–39; the sequence is MENPPLESEIKEDMSLKNHPPDKDKDKDTIMEQPSSPRH. The segment covering 8 to 30 has biased composition (basic and acidic residues); sequence SEIKEDMSLKNHPPDKDKDKDTI. One can recognise a JmjN domain in the interval 59 to 100; that stretch reads APVFTPSLEEFVDPLAYIEKIRPLAEPYGICRIIPPSTWKPP. The tract at residues 120 to 171 is disordered; it reads TVDLLQNREPMKKKPKSRKRKRRRNSRMGSSKRRSGSSPAESTSSPEAEEKF. Positions 130–137 match the Nuclear localization signal motif; sequence MKKKPKSR. Positions 130-154 are enriched in basic residues; sequence MKKKPKSRKRKRRRNSRMGSSKRRS. Residues 155 to 165 show a composition bias toward low complexity; the sequence is GSSPAESTSSP. Positions 261 to 427 constitute a JmjC domain; that stretch reads QYTLSGWNLN…HGQNAVELYS (167 aa). The Fe cation site is built by His-307, Glu-309, and His-395. Residues Cys-519, Cys-522, Cys-533, Cys-535, Cys-542, His-545, Cys-550, and Cys-552 each coordinate Zn(2+). The C5HC2 zinc finger occupies 519-571; sequence CFSCFYDLHLSASGCKCSPEEYACLKHADDLCSCDVKDGFILLRYTMDELSSL. Positions 644-702 constitute an FYR N-terminal domain; the sequence is ASENLGVSVEPINLGFLIFGKLWCNKYAIFPKGFRSRVKFYNVLDPTRMSNYISEVLDA. The region spanning 704–788 is the FYR C-terminal domain; the sequence is LMGPLFRVTL…HRLVEYWNHK (85 aa).

Belongs to the JARID1 histone demethylase family. Requires Fe(2+) as cofactor. Expressed in vascular tissues of roots, cotyledons, leaves and flowers. Expressed predominantly in phloem companion cells of roots. Present in inflorescences, roots, siliques, leaves and stems.

The protein resides in the nucleus. It carries out the reaction N(6),N(6),N(6)-trimethyl-L-lysyl(4)-[histone H3] + 2-oxoglutarate + O2 = N(6),N(6)-dimethyl-L-lysyl(4)-[histone H3] + formaldehyde + succinate + CO2. It catalyses the reaction N(6),N(6)-dimethyl-L-lysyl(4)-[histone H3] + 2-oxoglutarate + O2 = N(6)-methyl-L-lysyl(4)-[histone H3] + formaldehyde + succinate + CO2. Histone demethylase that demethylates 'Lys-4' (H3K4me) of histone H3 with a specific activity for H3K4me3 and H3K4me2. No activity on H3K9me3/2, H3K27me3/2 and H3K36me3/2. Involved in the control of flowering time by demethylating H3K4me3 at the FLC locus and repressing its expression. The repression of FLC level and reduction in H3K4me3 at the FLC locus results in induction of the flowering activator FT, which is a downstream target of FLC. The polypeptide is Lysine-specific demethylase JMJ18 (Arabidopsis thaliana (Mouse-ear cress)).